We begin with the raw amino-acid sequence, 111 residues long: T cell receptor alpha variable 18 (111 aa).

The signal sequence occupies residues 1-20 (MLSASCSGLVILLIFRRTSG). One can recognise an Ig-like domain in the interval 21-111 (DSVTQTEGPV…DSAVYYCALR (91 aa)). N-linked (GlcNAc...) asparagine glycosylation is present at Asn41. An intrachain disulfide couples Cys42 to Cys108.

In terms of assembly, alpha-beta TR is a heterodimer composed of an alpha and beta chain; disulfide-linked. The alpha-beta TR is associated with the transmembrane signaling CD3 coreceptor proteins to form the TR-CD3 (TcR or TCR). The assembly of alpha-beta TR heterodimers with CD3 occurs in the endoplasmic reticulum where a single alpha-beta TR heterodimer associates with one CD3D-CD3E heterodimer, one CD3G-CD3E heterodimer and one CD247 homodimer forming a stable octameric structure. CD3D-CD3E and CD3G-CD3E heterodimers preferentially associate with TR alpha and TR beta chains, respectively. The association of the CD247 homodimer is the last step of TcR assembly in the endoplasmic reticulum and is required for transport to the cell surface.

It localises to the cell membrane. Its function is as follows. V region of the variable domain of T cell receptor (TR) alpha chain that participates in the antigen recognition. Alpha-beta T cell receptors are antigen specific receptors which are essential to the immune response and are present on the cell surface of T lymphocytes. Recognize peptide-major histocompatibility (MH) (pMH) complexes that are displayed by antigen presenting cells (APC), a prerequisite for efficient T cell adaptive immunity against pathogens. Binding of alpha-beta TR to pMH complex initiates TR-CD3 clustering on the cell surface and intracellular activation of LCK that phosphorylates the ITAM motifs of CD3G, CD3D, CD3E and CD247 enabling the recruitment of ZAP70. In turn ZAP70 phosphorylates LAT, which recruits numerous signaling molecules to form the LAT signalosome. The LAT signalosome propagates signal branching to three major signaling pathways, the calcium, the mitogen-activated protein kinase (MAPK) kinase and the nuclear factor NF-kappa-B (NF-kB) pathways, leading to the mobilization of transcription factors that are critical for gene expression and essential for T cell growth and differentiation. The T cell repertoire is generated in the thymus, by V-(D)-J rearrangement. This repertoire is then shaped by intrathymic selection events to generate a peripheral T cell pool of self-MH restricted, non-autoaggressive T cells. Post-thymic interaction of alpha-beta TR with the pMH complexes shapes TR structural and functional avidity. The protein is T cell receptor alpha variable 18 of Homo sapiens (Human).